Here is a 109-residue protein sequence, read N- to C-terminus: Small ribosomal subunit protein uS17 (109 aa).

Belongs to the universal ribosomal protein uS17 family. Part of the 30S ribosomal subunit.

In terms of biological role, one of the primary rRNA binding proteins, it binds specifically to the 5'-end of 16S ribosomal RNA. This Methanococcus maripaludis (strain DSM 14266 / JCM 13030 / NBRC 101832 / S2 / LL) protein is Small ribosomal subunit protein uS17.